Reading from the N-terminus, the 230-residue chain is MAIGKRLKKAREGIDRTKLYPLADAIKMIKERAVSKFDETIEVAINLGVDPRHADQMVRGVVMLPNGTGRTLRVGVFARGAKAEEAKAAGADVVGAEDLVEKVQNGNIDFDRCIATPDMMPLVGRLGKVLGPRGMMPNPKIGTVTMDVAGAVKGAKGGSVEFRVEKAGIIQAGVGKASFAEDKLVENIKALADAVVKAKPAGAKGTYVQRVAVSSTMGPGVKVEPGTVLA.

Belongs to the universal ribosomal protein uL1 family. Part of the 50S ribosomal subunit.

In terms of biological role, binds directly to 23S rRNA. The L1 stalk is quite mobile in the ribosome, and is involved in E site tRNA release. Functionally, protein L1 is also a translational repressor protein, it controls the translation of the L11 operon by binding to its mRNA. In Bradyrhizobium sp. (strain BTAi1 / ATCC BAA-1182), this protein is Large ribosomal subunit protein uL1.